Reading from the N-terminus, the 241-residue chain is MQVFIYHTPELTPVHTLPDCAVVIDVLRATTTIATALNAGAEAVQTFSDLKTLMQVSDTWQPEKRLRAGERGGAKVEGCDLGNSPLDCTPDLMKGRRLFISTTNGTRALQRVEESPIVITAAMINRQAAVNYLLDKQPDTVWIVGSGWEGGYSLEDTACAGAIADALQEQSGQMAIGNDEVIASIALYRQWQNDLLGMFHSCSHGQRLLRLHCQEDLKYCANIDSLDVLPIQKEPSILVKL.

Belongs to the ComB family. Mg(2+) serves as cofactor.

It carries out the reaction (2R)-O-phospho-3-sulfolactate + H2O = (2R)-3-sulfolactate + phosphate. This chain is Probable 2-phosphosulfolactate phosphatase, found in Microcystis aeruginosa (strain NIES-843 / IAM M-2473).